The sequence spans 714 residues: Polyribonucleotide nucleotidyltransferase (714 aa).

Residues aspartate 487 and aspartate 493 each contribute to the Mg(2+) site. A KH domain is found at 554–613 (PRIETLKIPTDKIREVIGTGGKVIREIVEKTGAKINIEDDGTVKVASSDGNSIKAAIAWI). The region spanning 623 to 691 (GQIYEGTVVK…DRGKVRLSMR (69 aa)) is the S1 motif domain.

This sequence belongs to the polyribonucleotide nucleotidyltransferase family. Mg(2+) serves as cofactor.

Its subcellular location is the cytoplasm. It carries out the reaction RNA(n+1) + phosphate = RNA(n) + a ribonucleoside 5'-diphosphate. Its function is as follows. Involved in mRNA degradation. Catalyzes the phosphorolysis of single-stranded polyribonucleotides processively in the 3'- to 5'-direction. The chain is Polyribonucleotide nucleotidyltransferase from Methylocella silvestris (strain DSM 15510 / CIP 108128 / LMG 27833 / NCIMB 13906 / BL2).